Here is a 445-residue protein sequence, read N- to C-terminus: Phosphoglucosamine mutase (445 aa).

Serine 102 acts as the Phosphoserine intermediate in catalysis. 4 residues coordinate Mg(2+): serine 102, aspartate 241, aspartate 243, and aspartate 245. The residue at position 102 (serine 102) is a Phosphoserine.

This sequence belongs to the phosphohexose mutase family. Mg(2+) is required as a cofactor. In terms of processing, activated by phosphorylation.

The enzyme catalyses alpha-D-glucosamine 1-phosphate = D-glucosamine 6-phosphate. Its function is as follows. Catalyzes the conversion of glucosamine-6-phosphate to glucosamine-1-phosphate. This is Phosphoglucosamine mutase from Sodalis glossinidius (strain morsitans).